The sequence spans 500 residues: Glutamate--tRNA ligase (500 aa).

Residues 12–22 (PSPTGHLHIGN) carry the 'HIGH' region motif. Residues 259 to 263 (KLSKR) carry the 'KMSKS' region motif. Lys262 is an ATP binding site.

Belongs to the class-I aminoacyl-tRNA synthetase family. Glutamate--tRNA ligase type 1 subfamily. Monomer.

It localises to the cytoplasm. It catalyses the reaction tRNA(Glu) + L-glutamate + ATP = L-glutamyl-tRNA(Glu) + AMP + diphosphate. Catalyzes the attachment of glutamate to tRNA(Glu) in a two-step reaction: glutamate is first activated by ATP to form Glu-AMP and then transferred to the acceptor end of tRNA(Glu). The polypeptide is Glutamate--tRNA ligase (Lactobacillus delbrueckii subsp. bulgaricus (strain ATCC 11842 / DSM 20081 / BCRC 10696 / JCM 1002 / NBRC 13953 / NCIMB 11778 / NCTC 12712 / WDCM 00102 / Lb 14)).